A 231-amino-acid chain; its full sequence is Chalcone--flavanone isomerase (231 aa).

The substrate site is built by Thr-46, Asn-112, and Ser-189.

This sequence belongs to the chalcone isomerase family.

It carries out the reaction a chalcone = a flavanone.. It participates in secondary metabolite biosynthesis; flavonoid biosynthesis. Its function is as follows. Catalyzes the intramolecular cyclization of bicyclic chalcones into tricyclic (S)-flavanones. Responsible for the isomerization of 4,2',4',6'-tetrahydroxychalcone (also termed chalcone) into naringenin. The protein is Chalcone--flavanone isomerase (CHI) of Hordeum vulgare (Barley).